We begin with the raw amino-acid sequence, 294 residues long: 4-hydroxy-tetrahydrodipicolinate synthase (294 aa).

Residue threonine 47 coordinates pyruvate. The Proton donor/acceptor role is filled by tyrosine 135. Catalysis depends on lysine 163, which acts as the Schiff-base intermediate with substrate. Threonine 205 is a binding site for pyruvate.

It belongs to the DapA family. In terms of assembly, homotetramer; dimer of dimers.

The protein localises to the cytoplasm. The catalysed reaction is L-aspartate 4-semialdehyde + pyruvate = (2S,4S)-4-hydroxy-2,3,4,5-tetrahydrodipicolinate + H2O + H(+). Its pathway is amino-acid biosynthesis; L-lysine biosynthesis via DAP pathway; (S)-tetrahydrodipicolinate from L-aspartate: step 3/4. Functionally, catalyzes the condensation of (S)-aspartate-beta-semialdehyde [(S)-ASA] and pyruvate to 4-hydroxy-tetrahydrodipicolinate (HTPA). The sequence is that of 4-hydroxy-tetrahydrodipicolinate synthase from Rickettsia conorii (strain ATCC VR-613 / Malish 7).